A 78-amino-acid chain; its full sequence is Acyl carrier protein (78 aa).

The 76-residue stretch at 2-77 (SNIEQQVKKI…LAIDYINAHN (76 aa)) folds into the Carrier domain. S37 carries the O-(pantetheine 4'-phosphoryl)serine modification.

The protein belongs to the acyl carrier protein (ACP) family. In terms of processing, 4'-phosphopantetheine is transferred from CoA to a specific serine of apo-ACP by AcpS. This modification is essential for activity because fatty acids are bound in thioester linkage to the sulfhydryl of the prosthetic group.

It localises to the cytoplasm. It functions in the pathway lipid metabolism; fatty acid biosynthesis. Carrier of the growing fatty acid chain in fatty acid biosynthesis. In Neisseria meningitidis serogroup C / serotype 2a (strain ATCC 700532 / DSM 15464 / FAM18), this protein is Acyl carrier protein.